The sequence spans 642 residues: Threonine--tRNA ligase (642 aa).

One can recognise a TGS domain in the interval 1–61 (MPVITLPDGS…ETDAELSIIT (61 aa)). Residues 243 to 534 (DHRKIGKQLD…LIEEYAGRFP (292 aa)) are catalytic. Zn(2+)-binding residues include cysteine 334, histidine 385, and histidine 511.

It belongs to the class-II aminoacyl-tRNA synthetase family. In terms of assembly, homodimer. Zn(2+) serves as cofactor.

It localises to the cytoplasm. The enzyme catalyses tRNA(Thr) + L-threonine + ATP = L-threonyl-tRNA(Thr) + AMP + diphosphate + H(+). Catalyzes the attachment of threonine to tRNA(Thr) in a two-step reaction: L-threonine is first activated by ATP to form Thr-AMP and then transferred to the acceptor end of tRNA(Thr). Also edits incorrectly charged L-seryl-tRNA(Thr). This is Threonine--tRNA ligase from Shewanella baltica (strain OS195).